A 490-amino-acid chain; its full sequence is Velvet complex subunit 2 (490 aa).

2 disordered regions span residues 23-148 and 295-316; these read LYHH…ESQQ and YQTQ…TYGP. Residues 54–70 show a composition bias toward basic residues; sequence PPSHHFQLHPGHGHHQQ. Residues 112-131 are compositionally biased toward basic and acidic residues; it reads AAEHRDHPQHALDEPSRSHD. A Velvet domain is found at 164–474; the sequence is ATGRRYHLDV…AAQGIKIPIR (311 aa). Over residues 295–313 the composition is skewed to polar residues; it reads YQTQPTYSQGSSAYPSNGT.

It belongs to the velvet family. VelB subfamily. As to quaternary structure, component of the heterotrimeric velvet complex composed of LAE1, VEL1 and VEL2; VEL1 acting as a bridging protein between LAE1 and VEL2. Forms a heterodimeric complex with VOS1; the formation of the VEL2-VOS1 complex is light-dependent.

Its subcellular location is the nucleus. The protein localises to the cytoplasm. Component of the velvet transcription factor complex that controls sexual/asexual developmental ratio in response to light, promoting sexual development in the darkness while stimulating asexual sporulation under illumination. The velvet complex acts as a global regulator for secondary metabolite gene expression. Component of the VEL2-VOS1 heterodimeric complex that plays a dual role in activating genes associated with spore maturation and repressing certain development-associated genes. The VEL2-VOS1 complex binds DNA through the DNA-binding domain of VOS1 that recognizes an 11-nucleotide consensus sequence 5'-CTGGCCGCGGC-3' consisting of two motifs in the promoters of key developmental regulatory genes. Regulates expression of cellulase-encoding genes such as the cellobiohydrolase-encoding genes cbh1 and cbh2, the endo-beta-1,4-glucanase-encoding genes egl1 and egl2, and the beta-glucosidase-encoding gene bgl1. The sequence is that of Velvet complex subunit 2 from Hypocrea jecorina (strain QM6a) (Trichoderma reesei).